A 268-amino-acid polypeptide reads, in one-letter code: Protein CONTINUOUS VASCULAR RING 1 (268 aa).

Over 1-70 (MGDEKPVIVM…GWASKKFMTG (70 aa)) the chain is Cytoplasmic. Residues 21–48 (IPVADSGDKDDGSSSKPSSSSSASSSSH) are disordered. Over residues 34-48 (SSKPSSSSSASSSSH) the composition is skewed to low complexity. A helical transmembrane segment spans residues 71–91 (CVILLPIAITFYITWWFIHFV). Residues 92-103 (DGFFSPIYAQLG) lie on the Extracellular side of the membrane. The chain crosses the membrane as a helical span at residues 104-124 (INVFGFGFLTSIAFIFLVGVF). Residues 125–268 (MSSWLGASVL…LASIDRATSL (144 aa)) lie on the Cytoplasmic side of the membrane.

It belongs to the plant COV1 protein family. As to expression, mostly expressed in flowers and stems, and, to a lower extent, in roots and leaves.

It localises to the membrane. In terms of biological role, involved in the regulation of vascular patterning in the stem, probably by negatively regulating the differentiation of vascular tissue. This is Protein CONTINUOUS VASCULAR RING 1 from Arabidopsis thaliana (Mouse-ear cress).